The sequence spans 319 residues: Ferrochelatase (319 aa).

Positions 193 and 274 each coordinate Fe cation.

This sequence belongs to the ferrochelatase family.

It localises to the cytoplasm. The catalysed reaction is heme b + 2 H(+) = protoporphyrin IX + Fe(2+). It participates in porphyrin-containing compound metabolism; protoheme biosynthesis; protoheme from protoporphyrin-IX: step 1/1. Functionally, catalyzes the ferrous insertion into protoporphyrin IX. The polypeptide is Ferrochelatase (Actinobacillus pleuropneumoniae serotype 7 (strain AP76)).